Here is a 171-residue protein sequence, read N- to C-terminus: MIREIIRMGDKRLLRVAPPVTNLGSDELHALVADMFETMDAARGVGLAAPQIAVDLQLMVFGFEASERYPEAPAVPRTALANVQIEPLSDEMENGWEGCLSIPGLRAVIPRHRVIRYSGFAPDGTPIEREAEGFHARVVQHEYDHLVGRLYPSRIENFDTFGFEDVLSYDL.

2 residues coordinate Fe cation: Cys-99 and His-141. Glu-142 is an active-site residue. His-145 contacts Fe cation.

This sequence belongs to the polypeptide deformylase family. Requires Fe(2+) as cofactor.

It carries out the reaction N-terminal N-formyl-L-methionyl-[peptide] + H2O = N-terminal L-methionyl-[peptide] + formate. Its function is as follows. Removes the formyl group from the N-terminal Met of newly synthesized proteins. Requires at least a dipeptide for an efficient rate of reaction. N-terminal L-methionine is a prerequisite for activity but the enzyme has broad specificity at other positions. This Xanthomonas campestris pv. campestris (strain ATCC 33913 / DSM 3586 / NCPPB 528 / LMG 568 / P 25) protein is Peptide deformylase 1.